Here is a 723-residue protein sequence, read N- to C-terminus: Methionine--tRNA ligase (723 aa).

The short motif at 11-21 (PYANGPIHAGH) is the 'HIGH' region element. Zn(2+)-binding residues include Cys143, Cys146, Cys156, and Cys159. Positions 344-348 (KFSTS) match the 'KMSKS' region motif. Thr347 is a binding site for ATP. The region spanning 623-723 (DFAKLDLRVG…KEVKLGAKVR (101 aa)) is the tRNA-binding domain.

Belongs to the class-I aminoacyl-tRNA synthetase family. MetG type 1 subfamily. Homodimer. It depends on Zn(2+) as a cofactor.

Its subcellular location is the cytoplasm. It catalyses the reaction tRNA(Met) + L-methionine + ATP = L-methionyl-tRNA(Met) + AMP + diphosphate. Functionally, is required not only for elongation of protein synthesis but also for the initiation of all mRNA translation through initiator tRNA(fMet) aminoacylation. In Pyrococcus horikoshii (strain ATCC 700860 / DSM 12428 / JCM 9974 / NBRC 100139 / OT-3), this protein is Methionine--tRNA ligase.